A 266-amino-acid polypeptide reads, in one-letter code: Ribosomal RNA small subunit methyltransferase A (266 aa).

Residues H13, L15, G40, E61, D85, and N104 each contribute to the S-adenosyl-L-methionine site.

Belongs to the class I-like SAM-binding methyltransferase superfamily. rRNA adenine N(6)-methyltransferase family. RsmA subfamily.

It is found in the cytoplasm. The catalysed reaction is adenosine(1518)/adenosine(1519) in 16S rRNA + 4 S-adenosyl-L-methionine = N(6)-dimethyladenosine(1518)/N(6)-dimethyladenosine(1519) in 16S rRNA + 4 S-adenosyl-L-homocysteine + 4 H(+). In terms of biological role, specifically dimethylates two adjacent adenosines (A1518 and A1519) in the loop of a conserved hairpin near the 3'-end of 16S rRNA in the 30S particle. May play a critical role in biogenesis of 30S subunits. In Parabacteroides distasonis (strain ATCC 8503 / DSM 20701 / CIP 104284 / JCM 5825 / NCTC 11152), this protein is Ribosomal RNA small subunit methyltransferase A.